We begin with the raw amino-acid sequence, 465 residues long: Putative F-box/LRR-repeat protein At3g28410 (465 aa).

Positions 27–73 (ADFINYMPDDILHHILSFIPTDLAMRTSVLSRRWRHVWCETPCLDIK) constitute an F-box domain. 7 LRR repeats span residues 127-155 (VRDF…DVTL), 178-203 (FCQI…TLDT), 207-225 (LERL…DINR), 278-302 (ADRY…TVGE), 332-357 (FVRS…TLHT), 402-427 (TSKL…VVWL), and 447-465 (VETL…QSNC).

The polypeptide is Putative F-box/LRR-repeat protein At3g28410 (Arabidopsis thaliana (Mouse-ear cress)).